Here is a 147-residue protein sequence, read N- to C-terminus: Allograft inflammatory factor 1 (147 aa).

Residue serine 2 is modified to N-acetylserine. Lysine 11 is subject to N6-acetyllysine. Serine 39 carries the post-translational modification Phosphoserine. The 36-residue stretch at 45–80 (SKLEAFKTKYMEFDLNGNGDIDIMSLKRMLEKLGVP) folds into the EF-hand 1 domain. 7 residues coordinate Ca(2+): aspartate 58, asparagine 60, asparagine 62, aspartate 64, glutamate 98, threonine 100, and aspartate 105. The EF-hand 2; degenerate domain maps to 81-115 (KTHLELKKLIREVSSGSEETFSYSDFLRMMLGKRS). Positions 127–147 (KNKEHQKPTGPPAKKAISELP) are disordered.

Homodimer (Potential). Monomer. Interacts with LCP1. In terms of tissue distribution, cardiac allograft, spleen and testis. Expressed by inflammatory cells (macrophages and neutrophils).

It localises to the cytoplasm. The protein localises to the cytoskeleton. It is found in the cell projection. The protein resides in the ruffle membrane. Its subcellular location is the phagocytic cup. Functionally, actin-binding protein that enhances membrane ruffling and RAC activation. Enhances the actin-bundling activity of LCP1. Binds calcium. Plays a role in RAC signaling and in phagocytosis. May play an role in macrophage activation and function. Promotes the proliferation of vascular smooth muscle cells and of T-lymphocytes. Enhances lymphocyte migration. Plays a role in vascular inflammation. In Rattus norvegicus (Rat), this protein is Allograft inflammatory factor 1 (Aif1).